A 152-amino-acid polypeptide reads, in one-letter code: UPF0225 protein YchJ (152 aa).

The protein belongs to the UPF0225 family.

This Escherichia coli O81 (strain ED1a) protein is UPF0225 protein YchJ.